Here is an 806-residue protein sequence, read N- to C-terminus: Glycerol-3-phosphate acyltransferase (806 aa).

Positions 305-310 (CHRSHM) match the HXXXXD motif motif.

Belongs to the GPAT/DAPAT family.

It is found in the cell inner membrane. It catalyses the reaction sn-glycerol 3-phosphate + an acyl-CoA = a 1-acyl-sn-glycero-3-phosphate + CoA. It functions in the pathway phospholipid metabolism; CDP-diacylglycerol biosynthesis; CDP-diacylglycerol from sn-glycerol 3-phosphate: step 1/3. The protein is Glycerol-3-phosphate acyltransferase of Salmonella paratyphi B (strain ATCC BAA-1250 / SPB7).